The primary structure comprises 311 residues: 3-dehydro-scyllo-inosose hydrolase (311 aa).

Glutamate 35, histidine 37, aspartate 46, histidine 117, and glutamate 173 together coordinate Zn(2+).

This sequence belongs to the creatininase superfamily. In terms of assembly, homotrimer. It depends on Zn(2+) as a cofactor.

It carries out the reaction 3-dehydro-scyllo-inosose + H2O = 5-dehydro-L-gluconate + H(+). The protein operates within polyol metabolism; myo-inositol metabolism. Catalyzes the ring-opening hydrolysis of 3-dehydro-scyllo-inosose (diketo-inositol) to 5-dehydro-L-gluconate, and thus probably functions in a myo-inositol degradation pathway together with IolG, IolM and IolO. This is 3-dehydro-scyllo-inosose hydrolase from Thermotoga maritima (strain ATCC 43589 / DSM 3109 / JCM 10099 / NBRC 100826 / MSB8).